We begin with the raw amino-acid sequence, 899 residues long: MSVQYDAFSVEQTCADLETDMYNGLSSLQEITRRNKVHGDNDLKVEDEENMVVQFLKQFVKDPLILLLFASSAISVTLGNIDDAISIALAIVIVVTVGFVQEYRSEQSLKALNNLVPHYCNVIRSGKTEHIVASKLVPGDLVILQIGDRVPADLRIVEATELEIDESNLTGENSPRKKSSEAISSNISLTERNNIAFMGTLVRHGHGRGIVVATGSDTEFGRVFLTMQQTEKPKTPLQNSMDDLGKQLSLISLIGIAVIVLVGFFQGKNWLEMLTIGVSLAVAAIPEGLPIIVTVTLALGVLRMSKKRAIIRRLPSVETLGSVNVICSDKTGTLTMNHMTVTKIYTCGMLAAFSLPESEHIELSVRRTVGIEKALLAAALCNNSKVHNKADSILDTTCPWAGFPVDVALIECSERFGLKDPRETYSRISEVSFSSERKYMSVAVQYNSSKMNFMKGATEQVLSSCAYFSDQDGVQHELTAEMKENIQRNEFEMAASGLRIIAVASGINTNKLVFHGLFGINDPPRPQVRESVQYLMTGGVRVIMITGDSVVTAISIARSLGMAIPSNDEEAIRNYALTGAQLDDLDSSSLRDAVSRVVVFARTTPQHKMKIVEALQSLGDVVAMTGDGVNDAPALKLADIGIAMGRQGTDVAKEAADMILTDDSFATILSAVEEGKGIFNNIKNFITFQLSTSVAALSLIAISSVFGFQNPLNAMQILWINILMDGPPAQSLGVESVDEDVMMKPPRPRNAPIISVQLLQRVLLSAFIIVTVTIVVFRVQMQDGNVTARDTTMTFTCFVFFDMFNALACRSETKSVFKLGIFSNRMFNIAVGGSLIGQALVVYASPFQRIFQTEAIGLKDVLILLACTSSVLWVDEIRKWYRRRKGLVRTKSNYLLRNV.

The next 4 helical transmembrane spans lie at F59–G79, N80–V100, Q247–G267, and V282–L302. Catalysis depends on D329, which acts as the 4-aspartylphosphate intermediate. Transmembrane regions (helical) follow at residues F688–F708, Q757–F777, F827–F847, and E854–V874. S892 is subject to Phosphoserine.

This sequence belongs to the cation transport ATPase (P-type) (TC 3.A.3) family.

The protein resides in the endoplasmic reticulum membrane. It carries out the reaction Ca(2+)(in) + ATP + H2O = Ca(2+)(out) + ADP + phosphate + H(+). Its function is as follows. Transports calcium and manganese ions into the cell. Regulates cell morphogenesis through control of manganese and calcium homeostasis. The chain is Calcium-transporting ATPase 1 (pmr1) from Schizosaccharomyces pombe (strain 972 / ATCC 24843) (Fission yeast).